The following is a 147-amino-acid chain: Phospholipase A2 inhibitor subunit A (147 aa).

The C-type lectin domain occupies 62–143; it reads EICRQAGGRI…DDNLLVVCEF (82 aa). Disulfide bonds link Cys-64-Cys-141 and Cys-119-Cys-133. An N-linked (GlcNAc...) asparagine glycan is attached at Asn-103.

This sequence belongs to the alpha-type phospholipase A2 inhibitor family. Homotrimer; non-covalently linked. Glycosylated. In terms of tissue distribution, expressed by the liver.

The protein resides in the secreted. Inhibits the enzymatic activity of the acidic phospholipase A2 (PLA2). This chain is Phospholipase A2 inhibitor subunit A, found in Gloydius brevicaudus siniticus (Chinese mamushi).